Here is a 177-residue protein sequence, read N- to C-terminus: Decaprenylphosphoryl-5-phosphoribose phosphatase (177 aa).

4 helical membrane-spanning segments follow: residues 35 to 55, 62 to 82, 124 to 144, and 150 to 170; these read HFGE…IALP, LVAG…KRLV, GLPL…LLGV, and VAVG…VGGG.

This sequence belongs to the PA-phosphatase related phosphoesterase family.

Its subcellular location is the cell membrane. It carries out the reaction trans,octa-cis-decaprenylphospho-beta-D-ribofuranose 5-phosphate + H2O = trans,octa-cis-decaprenylphospho-beta-D-ribofuranose + phosphate. It functions in the pathway cell wall biogenesis; cell wall polysaccharide biosynthesis. Its function is as follows. Phosphatase involved in the biosynthesis of decaprenylphosphoryl arabinose (DPA), which serves as the arabinose donor for the biosynthesis of arabinogalactan, the major mycobacterial cell wall polysaccharide. Catalyzes the dephosphorylation of decaprenylphosphoryl-5-phosphoribose (DPPR) to decaprenyl-phosphoribose (DPR). This Mycobacterium tuberculosis (strain CDC 1551 / Oshkosh) protein is Decaprenylphosphoryl-5-phosphoribose phosphatase.